Reading from the N-terminus, the 275-residue chain is N-(5'-phosphoribosyl)anthranilate isomerase 2, chloroplastic (275 aa).

The N-terminal 32 residues, 1–32 (MSTGISTDLHVHFGALNFSKTYKSGLSNRTVS), are a transit peptide targeting the chloroplast.

It belongs to the TrpF family. Expressed in roots and shoots.

The protein localises to the plastid. The protein resides in the chloroplast. It catalyses the reaction N-(5-phospho-beta-D-ribosyl)anthranilate = 1-(2-carboxyphenylamino)-1-deoxy-D-ribulose 5-phosphate. Its pathway is amino-acid biosynthesis; L-tryptophan biosynthesis; L-tryptophan from chorismate: step 3/5. The protein is N-(5'-phosphoribosyl)anthranilate isomerase 2, chloroplastic (PAI2) of Arabidopsis thaliana (Mouse-ear cress).